The sequence spans 475 residues: Lipoprotein lipase (475 aa).

The first 27 residues, 1–27 (MESKALLLVALGMWFQSLTATRGGVAA), serve as a signal peptide directing secretion. Residues 32-53 (GDFIDIESKFALRTPEDTAEDT) are interaction with GPIHBP1. The cysteines at positions 54 and 67 are disulfide-linked. An N-linked (GlcNAc...) asparagine glycan is attached at Asn-70. Tyr-121 is subject to 3'-nitrotyrosine. Ser-159 serves as the catalytic Nucleophile. Asp-183 acts as the Charge relay system in catalysis. Tyr-191 bears the 3'-nitrotyrosine mark. Ca(2+) contacts are provided by Ala-194, Arg-197, Ser-199, and Asp-202. Cys-243 and Cys-266 are disulfide-bonded. Catalysis depends on His-268, which acts as the Charge relay system. Cystine bridges form between Cys-291/Cys-310 and Cys-302/Cys-305. The region spanning 341–464 (FHYQVKIHFS…KGKASVVFVK (124 aa)) is the PLAT domain. Tyr-343 carries the 3'-nitrotyrosine modification. Asn-386 is a glycosylation site (N-linked (GlcNAc...) asparagine). The important for interaction with lipoprotein particles stretch occupies residues 417–421 (WSDWW). Residues 430–434 (KIRVK) are important for heparin binding. Positions 443-467 (IFCSREKVSHLQKGKASVVFVKCHD) are interaction with GPIHBP1. Cys-445 and Cys-465 form a disulfide bridge.

Belongs to the AB hydrolase superfamily. Lipase family. Homodimer. Interacts with GPIHBP1 with 1:1 stoichiometry. Interacts with APOC2; the interaction activates LPL activity in the presence of lipids. Interaction with heparan sulfate proteoglycans is required to protect LPL against loss of activity. Associates with lipoprotein particles in blood plasma. Interacts with LMF1 and SEL1L; interaction with SEL1L is required to prevent aggregation of newly synthesized LPL in the endoplasmic reticulum (ER), and for normal export of LPL from the ER to the extracellular space. Interacts with SORL1; SORL1 acts as a sorting receptor, promoting LPL localization to endosomes and later to lysosomes, leading to degradation of newly synthesized LPL. In terms of processing, tyrosine nitration after lipopolysaccharide (LPS) challenge down-regulates the lipase activity.

The protein localises to the cell membrane. It is found in the secreted. It localises to the extracellular space. The protein resides in the extracellular matrix. The enzyme catalyses a triacylglycerol + H2O = a diacylglycerol + a fatty acid + H(+). Its activity is regulated as follows. The apolipoprotein APOC2 acts as a coactivator of LPL activity. Ca(2+) binding promotes protein stability and formation of the active homodimer. Interaction with GPIHBP1 protects LPL against inactivation by ANGPTL4. Its function is as follows. Key enzyme in triglyceride metabolism. Catalyzes the hydrolysis of triglycerides from circulating chylomicrons and very low density lipoproteins (VLDL), and thereby plays an important role in lipid clearance from the blood stream, lipid utilization and storage. Mediates margination of triglyceride-rich lipoprotein particles in capillaries. Recruited to its site of action on the luminal surface of vascular endothelium by binding to GPIHBP1 and cell surface heparan sulfate proteoglycans. The sequence is that of Lipoprotein lipase (LPL) from Neovison vison (American mink).